Here is a 1072-residue protein sequence, read N- to C-terminus: Carbamoyl phosphate synthase large chain (1072 aa).

A carboxyphosphate synthetic domain region spans residues 1–401 (MPKYKDINKV…SLLKAVRSLE (401 aa)). ATP-binding residues include R129, R169, G175, G176, K208, L210, E215, G241, V242, H243, Q284, and E298. Residues 133-327 (KRKMQEIGEP…IAKVAAKIAI (195 aa)) form the ATP-grasp 1 domain. Q284, E298, and N300 together coordinate Mg(2+). 3 residues coordinate Mn(2+): Q284, E298, and N300. The oligomerization domain stretch occupies residues 402–544 (IKAYGLRLNN…YIYSTYGEED (143 aa)). A carbamoyl phosphate synthetic domain region spans residues 545-929 (EVEIHEIPKV…ALYKALEGAG (385 aa)). Residues 671-861 (SKLLKELNIN…MVKLAVEVAL (191 aa)) enclose the ATP-grasp 2 domain. Residues R707, K746, I748, E752, G777, V778, H779, S780, Q820, and E832 each contribute to the ATP site. Residues Q820, E832, and N834 each coordinate Mg(2+). Residues Q820, E832, and N834 each contribute to the Mn(2+) site. Residues 930-1072 (LKIPKKGKIL…QKDNVKNLVL (143 aa)) form the MGS-like domain. The interval 930-1072 (LKIPKKGKIL…QKDNVKNLVL (143 aa)) is allosteric domain.

The protein belongs to the CarB family. In terms of assembly, composed of two chains; the small (or glutamine) chain promotes the hydrolysis of glutamine to ammonia, which is used by the large (or ammonia) chain to synthesize carbamoyl phosphate. Tetramer of heterodimers (alpha,beta)4. Mg(2+) serves as cofactor. The cofactor is Mn(2+).

The enzyme catalyses hydrogencarbonate + L-glutamine + 2 ATP + H2O = carbamoyl phosphate + L-glutamate + 2 ADP + phosphate + 2 H(+). It carries out the reaction hydrogencarbonate + NH4(+) + 2 ATP = carbamoyl phosphate + 2 ADP + phosphate + 2 H(+). Its pathway is amino-acid biosynthesis; L-arginine biosynthesis; carbamoyl phosphate from bicarbonate: step 1/1. It functions in the pathway pyrimidine metabolism; UMP biosynthesis via de novo pathway; (S)-dihydroorotate from bicarbonate: step 1/3. Large subunit of the glutamine-dependent carbamoyl phosphate synthetase (CPSase). CPSase catalyzes the formation of carbamoyl phosphate from the ammonia moiety of glutamine, carbonate, and phosphate donated by ATP, constituting the first step of 2 biosynthetic pathways, one leading to arginine and/or urea and the other to pyrimidine nucleotides. The large subunit (synthetase) binds the substrates ammonia (free or transferred from glutamine from the small subunit), hydrogencarbonate and ATP and carries out an ATP-coupled ligase reaction, activating hydrogencarbonate by forming carboxy phosphate which reacts with ammonia to form carbamoyl phosphate. In Thermoanaerobacter sp. (strain X514), this protein is Carbamoyl phosphate synthase large chain.